We begin with the raw amino-acid sequence, 310 residues long: Tyrosine recombinase XerC (310 aa).

Residues 22–103 enclose the Core-binding (CB) domain; the sequence is SQMLEAIEDF…SVKSFSTWAV (82 aa). The Tyr recombinase domain maps to 124–304; that stretch reads NLPRVLGEVQ…SSQRLLEAFR (181 aa). Active-site residues include arginine 165, lysine 189, histidine 256, arginine 259, and histidine 282. The O-(3'-phospho-DNA)-tyrosine intermediate role is filled by tyrosine 291.

Belongs to the 'phage' integrase family. XerC subfamily. Forms a cyclic heterotetrameric complex composed of two molecules of XerC and two molecules of XerD.

It localises to the cytoplasm. In terms of biological role, site-specific tyrosine recombinase, which acts by catalyzing the cutting and rejoining of the recombining DNA molecules. The XerC-XerD complex is essential to convert dimers of the bacterial chromosome into monomers to permit their segregation at cell division. It also contributes to the segregational stability of plasmids. The protein is Tyrosine recombinase XerC of Corynebacterium efficiens (strain DSM 44549 / YS-314 / AJ 12310 / JCM 11189 / NBRC 100395).